Reading from the N-terminus, the 332-residue chain is L-lactate dehydrogenase (332 aa).

Residues 29–57 (GQVGMASAFSILAQNVSKEVCLIDVCADK) and Arg-99 each bind NAD(+). Substrate contacts are provided by Arg-106, Asn-138, and Arg-169. An NAD(+)-binding site is contributed by Asn-138. The active-site Proton acceptor is the His-193. Thr-248 serves as a coordination point for substrate.

The protein belongs to the LDH/MDH superfamily. LDH family. In terms of assembly, homotetramer.

Its subcellular location is the cytoplasm. The catalysed reaction is (S)-lactate + NAD(+) = pyruvate + NADH + H(+). Its pathway is fermentation; pyruvate fermentation to lactate; (S)-lactate from pyruvate: step 1/1. The polypeptide is L-lactate dehydrogenase (Drosophila melanogaster (Fruit fly)).